The following is an 89-amino-acid chain: Large ribosomal subunit protein bL27 (89 aa).

Positions Met1–Leu21 are disordered.

The protein belongs to the bacterial ribosomal protein bL27 family.

The polypeptide is Large ribosomal subunit protein bL27 (Bradyrhizobium diazoefficiens (strain JCM 10833 / BCRC 13528 / IAM 13628 / NBRC 14792 / USDA 110)).